The following is a 485-amino-acid chain: Efflux pump bik6 (485 aa).

The next 6 helical transmembrane spans lie at 42–62 (VYTTALWALTTCWITFASAIY), 86–106 (LLIFGFALGPMLWAPLCEVYG), 108–128 (KWPALAPYFISAAFAFGTATA), 139–159 (FFAGVFGSSPISITGGSIVDI), 172–192 (YGITIAAAPTLGPIIGGAFIA), and 199–219 (WTEYLTGIVMMVQFVLDALWL). N241 carries N-linked (GlcNAc...) asparagine glycosylation. Transmembrane regions (helical) follow at residues 269–289 (MLLDPICLLLTIYTSFVYAIL), 306–326 (WGPVVSQLPFLSLLIGCLFAA), 353–373 (LPPMMVGGFAFSAGLFLFGWT), 379–399 (SSPWPSIIGVFLTGVGFTTIF), 417–437 (AIAANTFVRSMAAGAFPLFVW), and 447–467 (WGSTIFACISVLLLPAPFLFF).

The protein belongs to the major facilitator superfamily.

The protein resides in the membrane. Functionally, efflux pump; part of the gene cluster that mediates the biosynthesis of bikaverin, a red pigment also considered as a mycotoxin. This is Efflux pump bik6 from Gibberella fujikuroi (strain CBS 195.34 / IMI 58289 / NRRL A-6831) (Bakanae and foot rot disease fungus).